A 264-amino-acid polypeptide reads, in one-letter code: Agamous-like MADS-box protein AGL15 (264 aa).

The 55-residue stretch at 3–57 folds into the MADS-box domain; it reads RGKIEIKRIENANSRQVTFSKRRAGLLKKAHELSVLCDAEVAVIVFSKSGKLFEF. A K-box domain is found at 87–177; the sequence is NQEECTEVDL…RRQVQELRSF (91 aa). The segment at 223–264 is disordered; the sequence is LQLGLPGEAHDTRKNEGDRESPSSDSVTTSTTRATAQRISLV. The segment covering 230–244 has biased composition (basic and acidic residues); the sequence is EAHDTRKNEGDRESP. The span at 245–257 shows a compositional bias: low complexity; that stretch reads SSDSVTTSTTRAT.

The protein resides in the nucleus. Probable transcription factor. This chain is Agamous-like MADS-box protein AGL15 (AGL15), found in Brassica napus (Rape).